Consider the following 295-residue polypeptide: Protoheme IX farnesyltransferase 2 (295 aa).

9 helical membrane-spanning segments follow: residues 9–29, 36–56, 83–103, 108–128, 135–155, 163–183, 209–229, 230–250, and 264–284; these read ITKP…FFLA, FALF…GCVF, LTLA…LLYV, LSAF…SLWL, GTLV…CAVS, VTLL…IAIF, IVLY…GGYA, GLGY…MAWG, and VFGF…VDSQ.

It belongs to the UbiA prenyltransferase family. Protoheme IX farnesyltransferase subfamily.

The protein resides in the cell inner membrane. The enzyme catalyses heme b + (2E,6E)-farnesyl diphosphate + H2O = Fe(II)-heme o + diphosphate. Its pathway is porphyrin-containing compound metabolism; heme O biosynthesis; heme O from protoheme: step 1/1. Functionally, converts heme B (protoheme IX) to heme O by substitution of the vinyl group on carbon 2 of heme B porphyrin ring with a hydroxyethyl farnesyl side group. The sequence is that of Protoheme IX farnesyltransferase 2 from Pseudomonas putida (strain W619).